The following is a 175-amino-acid chain: Bacterial proteasome activator (175 aa).

The segment at 152–175 (LPPGIQVPGAQRGGATHPGTGQYL) is disordered. A HbYX motif motif is present at residues 173–175 (QYL).

It belongs to the Bpa family. Forms a homooligomeric, either hexameric or heptameric, ring-like structure which stacks co-axially with the proteasomal alpha-rings.

In terms of biological role, interacts with the core proteasome alpha-subunit (PrcA) through its C-terminal hydrophobic-tyrosine-X motif (HbYX motif). Interaction of Bpa with the proteasome stimulates proteasomal peptidase and casein degradation activity, which suggests Bpa could play a role in the removal of non-native or damaged proteins by influencing the conformation of the proteasome complex upon interaction. In Mycolicibacterium smegmatis (strain ATCC 700084 / mc(2)155) (Mycobacterium smegmatis), this protein is Bacterial proteasome activator.